Here is a 72-residue protein sequence, read N- to C-terminus: Defensin-like protein 35 (72 aa).

An N-terminal signal peptide occupies residues 1-22 (MASNKISFSFVLCLYMCSLLDA). 3 disulfide bridges follow: cysteine 32/cysteine 58, cysteine 44/cysteine 67, and cysteine 48/cysteine 69.

It belongs to the DEFL family.

The protein localises to the secreted. This Arabidopsis thaliana (Mouse-ear cress) protein is Defensin-like protein 35.